The chain runs to 405 residues: Argininosuccinate synthase (405 aa).

ATP-binding positions include 11–19 and Ala38; that span reads AYSGGLDTS. Residues Tyr91 and Ser96 each coordinate L-citrulline. Gly121 provides a ligand contact to ATP. L-aspartate is bound by residues Thr123, Asn127, and Asp128. Residue Asn127 coordinates L-citrulline. Residues Arg131, Ser181, Ser190, Glu266, and Tyr278 each coordinate L-citrulline.

This sequence belongs to the argininosuccinate synthase family. Type 1 subfamily. As to quaternary structure, homotetramer.

The protein localises to the cytoplasm. It catalyses the reaction L-citrulline + L-aspartate + ATP = 2-(N(omega)-L-arginino)succinate + AMP + diphosphate + H(+). Its pathway is amino-acid biosynthesis; L-arginine biosynthesis; L-arginine from L-ornithine and carbamoyl phosphate: step 2/3. This is Argininosuccinate synthase from Nitratiruptor sp. (strain SB155-2).